A 268-amino-acid chain; its full sequence is Shikimate dehydrogenase (NADP(+)) (268 aa).

Shikimate is bound at residue T62. K66 functions as the Proton acceptor in the catalytic mechanism. E78 serves as a coordination point for NADP(+). N87 and D102 together coordinate shikimate. NADP(+) contacts are provided by residues 126 to 130 (GSGGI) and L207. A shikimate-binding site is contributed by Y209. An NADP(+)-binding site is contributed by G230.

Belongs to the shikimate dehydrogenase family. In terms of assembly, homodimer.

The catalysed reaction is shikimate + NADP(+) = 3-dehydroshikimate + NADPH + H(+). The protein operates within metabolic intermediate biosynthesis; chorismate biosynthesis; chorismate from D-erythrose 4-phosphate and phosphoenolpyruvate: step 4/7. In terms of biological role, involved in the biosynthesis of the chorismate, which leads to the biosynthesis of aromatic amino acids. Catalyzes the reversible NADPH linked reduction of 3-dehydroshikimate (DHSA) to yield shikimate (SA). This Thermoplasma acidophilum (strain ATCC 25905 / DSM 1728 / JCM 9062 / NBRC 15155 / AMRC-C165) protein is Shikimate dehydrogenase (NADP(+)).